Here is a 485-residue protein sequence, read N- to C-terminus: Probable coniferyl aldehyde dehydrogenase (485 aa).

Residues Glu-226 and Cys-260 contribute to the active site.

This sequence belongs to the aldehyde dehydrogenase family.

The enzyme catalyses (E)-coniferaldehyde + NADP(+) + H2O = (E)-ferulate + NADPH + 2 H(+). The catalysed reaction is (E)-coniferaldehyde + NAD(+) + H2O = (E)-ferulate + NADH + 2 H(+). This is Probable coniferyl aldehyde dehydrogenase (calB) from Caulobacter vibrioides (strain ATCC 19089 / CIP 103742 / CB 15) (Caulobacter crescentus).